A 78-amino-acid chain; its full sequence is Sec-independent protein translocase protein TatA (78 aa).

The helical transmembrane segment at 4–21 threads the bilayer; that stretch reads SFQHILILLVVVLLLFGR. The segment at 49 to 78 is disordered; the sequence is TAKSDSIKTIDNTGKPTNVQANPQRQDSTV. Over residues 57–78 the composition is skewed to polar residues; sequence TIDNTGKPTNVQANPQRQDSTV.

The protein belongs to the TatA/E family. In terms of assembly, the Tat system comprises two distinct complexes: a TatABC complex, containing multiple copies of TatA, TatB and TatC subunits, and a separate TatA complex, containing only TatA subunits. Substrates initially bind to the TatABC complex, which probably triggers association of the separate TatA complex to form the active translocon.

Its subcellular location is the cell inner membrane. In terms of biological role, part of the twin-arginine translocation (Tat) system that transports large folded proteins containing a characteristic twin-arginine motif in their signal peptide across membranes. TatA could form the protein-conducting channel of the Tat system. This is Sec-independent protein translocase protein TatA from Afipia carboxidovorans (strain ATCC 49405 / DSM 1227 / KCTC 32145 / OM5) (Oligotropha carboxidovorans).